A 242-amino-acid polypeptide reads, in one-letter code: Aspartate/glutamate leucyltransferase (242 aa).

It belongs to the R-transferase family. Bpt subfamily.

The protein localises to the cytoplasm. It carries out the reaction N-terminal L-glutamyl-[protein] + L-leucyl-tRNA(Leu) = N-terminal L-leucyl-L-glutamyl-[protein] + tRNA(Leu) + H(+). It catalyses the reaction N-terminal L-aspartyl-[protein] + L-leucyl-tRNA(Leu) = N-terminal L-leucyl-L-aspartyl-[protein] + tRNA(Leu) + H(+). Functions in the N-end rule pathway of protein degradation where it conjugates Leu from its aminoacyl-tRNA to the N-termini of proteins containing an N-terminal aspartate or glutamate. In Alcanivorax borkumensis (strain ATCC 700651 / DSM 11573 / NCIMB 13689 / SK2), this protein is Aspartate/glutamate leucyltransferase.